A 373-amino-acid polypeptide reads, in one-letter code: Glutamate 5-kinase 2 (373 aa).

Lys11 is an ATP binding site. Positions 51, 138, and 150 each coordinate substrate. Residues 170–171 and 212–218 each bind ATP; these read SD and TGGMKSK. Residues 279–355 enclose the PUA domain; sequence EGDIVVHNES…TNQETAASSQ (77 aa).

This sequence belongs to the glutamate 5-kinase family.

The protein resides in the cytoplasm. The enzyme catalyses L-glutamate + ATP = L-glutamyl 5-phosphate + ADP. Its pathway is amino-acid biosynthesis; L-proline biosynthesis; L-glutamate 5-semialdehyde from L-glutamate: step 1/2. Its function is as follows. Catalyzes the transfer of a phosphate group to glutamate to form L-glutamate 5-phosphate. The sequence is that of Glutamate 5-kinase 2 from Bacillus licheniformis (strain ATCC 14580 / DSM 13 / JCM 2505 / CCUG 7422 / NBRC 12200 / NCIMB 9375 / NCTC 10341 / NRRL NRS-1264 / Gibson 46).